Here is a 524-residue protein sequence, read N- to C-terminus: 2-isopropylmalate synthase (524 aa).

The Pyruvate carboxyltransferase domain maps to 5-267 (VIIFDTTLRD…HTNINHQEIF (263 aa)). Mn(2+)-binding residues include Asp14, His202, His204, and Asn238. The interval 392-524 (SLDYFSVQSG…SKHQNNQETV (133 aa)) is regulatory domain.

The protein belongs to the alpha-IPM synthase/homocitrate synthase family. LeuA type 1 subfamily. In terms of assembly, homodimer. Mn(2+) serves as cofactor.

It is found in the cytoplasm. The catalysed reaction is 3-methyl-2-oxobutanoate + acetyl-CoA + H2O = (2S)-2-isopropylmalate + CoA + H(+). The protein operates within amino-acid biosynthesis; L-leucine biosynthesis; L-leucine from 3-methyl-2-oxobutanoate: step 1/4. In terms of biological role, catalyzes the condensation of the acetyl group of acetyl-CoA with 3-methyl-2-oxobutanoate (2-ketoisovalerate) to form 3-carboxy-3-hydroxy-4-methylpentanoate (2-isopropylmalate). The polypeptide is 2-isopropylmalate synthase (Serratia proteamaculans (strain 568)).